We begin with the raw amino-acid sequence, 319 residues long: Methionyl-tRNA formyltransferase (319 aa).

Residue 116–119 coordinates (6S)-5,6,7,8-tetrahydrofolate; it reads SLLP.

It belongs to the Fmt family.

It catalyses the reaction L-methionyl-tRNA(fMet) + (6R)-10-formyltetrahydrofolate = N-formyl-L-methionyl-tRNA(fMet) + (6S)-5,6,7,8-tetrahydrofolate + H(+). Its function is as follows. Attaches a formyl group to the free amino group of methionyl-tRNA(fMet). The formyl group appears to play a dual role in the initiator identity of N-formylmethionyl-tRNA by promoting its recognition by IF2 and preventing the misappropriation of this tRNA by the elongation apparatus. The sequence is that of Methionyl-tRNA formyltransferase from Treponema pallidum (strain Nichols).